We begin with the raw amino-acid sequence, 620 residues long: Chaperone protein HscA homolog (620 aa).

This sequence belongs to the heat shock protein 70 family.

Chaperone involved in the maturation of iron-sulfur cluster-containing proteins. Has a low intrinsic ATPase activity which is markedly stimulated by HscB. This Pseudomonas syringae pv. syringae (strain B728a) protein is Chaperone protein HscA homolog.